Reading from the N-terminus, the 251-residue chain is 14-3-3-like protein (251 aa).

This sequence belongs to the 14-3-3 family. In terms of tissue distribution, most abundant in roots and flowers.

The polypeptide is 14-3-3-like protein (Nicotiana tabacum (Common tobacco)).